A 210-amino-acid polypeptide reads, in one-letter code: HTH-type transcriptional repressor ComR (210 aa).

The HTH tetR-type domain occupies 18–78 (VFDRDAALDK…AVLDRYIDRF (61 aa)). Residues 41-60 (SLADLVEATGAKAPTLYAEF) constitute a DNA-binding region (H-T-H motif).

Binding to the promoter region of BhsA/ComC is released in the presence of copper. Functionally, represses expression of BhsA/ComC by binding to its promoter region in the absence of copper. The chain is HTH-type transcriptional repressor ComR (comR) from Escherichia coli (strain K12).